Consider the following 328-residue polypeptide: Diacetylchitobiose uptake system permease protein DasB (328 aa).

The disordered stretch occupies residues 1 to 27; the sequence is MTVQTERPPSGPSDVRKADGGGTGGTR. 6 consecutive transmembrane segments (helical) span residues 36 to 56, 104 to 124, 134 to 154, 188 to 208, 247 to 267, and 297 to 317; these read ALAPYLLLLPAAAATVLLLGW, IIFTAVNVVLTMVVGGLIGLL, FVLMIGLVLAWAMPVVAATTV, FSTFFVVTVLIVWMSVPFVAI, FLYATTFLEVIWIFKAFVQVY, and MGAAIAVLTILILLGLTAYYL. One can recognise an ABC transmembrane type-1 domain in the interval 100 to 316; sequence TVRSIIFTAV…LILLGLTAYY (217 aa).

The protein belongs to the binding-protein-dependent transport system permease family. The complex is composed of two ATP-binding proteins (MsiK), two transmembrane proteins (DasB and DasC) and a solute-binding protein (DasA).

The protein resides in the cell membrane. Its function is as follows. Part of the ABC transporter complex DasABC-MsiK involved in N,N'-diacetylchitobiose ((GlcNAc)2) uptake. Responsible for the translocation of the substrate across the membrane. The protein is Diacetylchitobiose uptake system permease protein DasB of Streptomyces coelicolor (strain ATCC BAA-471 / A3(2) / M145).